The following is a 292-amino-acid chain: 33 kDa chaperonin (292 aa).

Cystine bridges form between Cys-230/Cys-232 and Cys-263/Cys-266.

The protein belongs to the HSP33 family. In terms of processing, under oxidizing conditions two disulfide bonds are formed involving the reactive cysteines. Under reducing conditions zinc is bound to the reactive cysteines and the protein is inactive.

Its subcellular location is the cytoplasm. In terms of biological role, redox regulated molecular chaperone. Protects both thermally unfolding and oxidatively damaged proteins from irreversible aggregation. Plays an important role in the bacterial defense system toward oxidative stress. The polypeptide is 33 kDa chaperonin (Cronobacter sakazakii (strain ATCC BAA-894) (Enterobacter sakazakii)).